Reading from the N-terminus, the 205-residue chain is MLSTDFEYPLWESLSQVCGIDEAGRGPLAGPVVAAAVVFPRHFRPTGIFAKLDDSKKLTAELRDELALAIRESAESWALGVVDAETIDRINILQATMLAMNLAVESLGSTPEFLLVDGNRFRPVLPIPYQTIVKGDSKVFSIAAASVLAKTHRDELMTTSAAEYPEYGFEVHFGYPTARHVEAIARHGRCAIHRQSFKLRKLGEK.

The RNase H type-2 domain occupies 15–205 (SQVCGIDEAG…SFKLRKLGEK (191 aa)). A divalent metal cation-binding residues include Asp-21, Glu-22, and Asp-117.

This sequence belongs to the RNase HII family. Requires Mn(2+) as cofactor. The cofactor is Mg(2+).

It localises to the cytoplasm. The enzyme catalyses Endonucleolytic cleavage to 5'-phosphomonoester.. In terms of biological role, endonuclease that specifically degrades the RNA of RNA-DNA hybrids. In Chlorobaculum tepidum (strain ATCC 49652 / DSM 12025 / NBRC 103806 / TLS) (Chlorobium tepidum), this protein is Ribonuclease HII.